A 150-amino-acid chain; its full sequence is Avidin-related protein 3 (150 aa).

A signal peptide spans Met-1–Ser-24. The Avidin-like domain maps to Arg-26–Thr-147. A disulfide bond links Cys-28 and Cys-105. Biotin is bound by residues Asn-36, Ser-40, Tyr-57, Thr-59, and Asp-63. An N-linked (GlcNAc...) asparagine glycan is attached at Asn-93. Biotin contacts are provided by Ser-95, Ser-99, and Asn-140. A glycan (N-linked (GlcNAc...) asparagine) is linked at Asn-141.

This sequence belongs to the avidin/streptavidin family. In terms of assembly, homotetramer. In terms of processing, glycosylated.

It is found in the secreted. Its function is as follows. Forms a strong non-covalent specific complex with biotin. The sequence is that of Avidin-related protein 3 (AVR3) from Gallus gallus (Chicken).